We begin with the raw amino-acid sequence, 399 residues long: Vitamin K-dependent protein Z (399 aa).

The signal sequence occupies residues 1-22 (MAGCILLLRGFILTLILHQVEL). The propeptide occupies 23–40 (SVFLPAPKANNVLRRWRR). The 46-residue stretch at 41–86 (GSSYFLEEIFQGNLEKECYEEVCNYEEAREVFENDVITDEFWRQYG) folds into the Gla domain. 11 positions are modified to 4-carboxyglutamate: glutamate 47, glutamate 48, glutamate 55, glutamate 57, glutamate 60, glutamate 61, glutamate 66, glutamate 67, glutamate 70, glutamate 73, and glutamate 80. A disulfide bridge connects residues cysteine 58 and cysteine 63. EGF-like domains lie at 87–123 (GGSPCVSQPCLNNGTCEDHIRSYSCTCSPGYEGKTCA) and 125–166 (AKNE…KSCG). 7 disulfides stabilise this stretch: cysteine 91/cysteine 102, cysteine 96/cysteine 111, cysteine 113/cysteine 122, cysteine 129/cysteine 141, cysteine 137/cysteine 150, cysteine 152/cysteine 165, and cysteine 208/cysteine 224. N-linked (GlcNAc...) asparagine glycosylation occurs at asparagine 99. At aspartate 104 the chain carries (3R)-3-hydroxyaspartate. The region spanning 172–399 (ACGALTSEHI…YSMWFKQIMK (228 aa)) is the Peptidase S1 domain. N-linked (GlcNAc...) asparagine glycosylation is found at asparagine 230, asparagine 305, and asparagine 331. Cysteine 326 and cysteine 340 are disulfide-bonded.

The protein belongs to the peptidase S1 family. The iron and 2-oxoglutarate dependent 3-hydroxylation of aspartate and asparagine is (R) stereospecific within EGF domains. In terms of tissue distribution, plasma.

It localises to the secreted. Appears to assist hemostasis by binding thrombin and promoting its association with phospholipid vesicles. Inhibits activity of the coagulation protease factor Xa in the presence of SERPINA10, calcium and phospholipids. The sequence is that of Vitamin K-dependent protein Z (Proz) from Mus musculus (Mouse).